The following is a 489-amino-acid chain: Tripartite motif-containing protein 10 (489 aa).

The RING-type zinc-finger motif lies at 16–61 (CPICQGTLREPVTIDCGHNFCRGCLTRYCEIPGPESEESLSCPLCK). A B box-type zinc finger spans residues 94-135 (EVEDACPEHGEKIYFFCEEDEAQLCVVCRETGQHGAHTVRFL). Zn(2+)-binding residues include cysteine 99, histidine 102, cysteine 121, and histidine 127. The stretch at 144 to 180 (EQIQKCLVCLRKEREEIQETQSRENKRIQVLLTQVAT) forms a coiled coil. A B30.2/SPRY domain is found at 292 to 486 (QEMKTFLEKL…FSLSCQEGAV (195 aa)).

The protein belongs to the TRIM/RBCC family. As to quaternary structure, interacts with IFNAR1; this interaction prevents association of IFNAR1 with TYK2. In terms of tissue distribution, expressed in embryonic liver.

It is found in the cytoplasm. Its function is as follows. E3 ligase that plays an essential role in the differentiation and survival of terminal erythroid cells. May directly bind to PTEN and promote its ubiquitination, resulting in its proteasomal degradation and activation of hypertrophic signaling. In addition, plays a role in immune response regulation by repressing the phosphorylation of STAT1 and STAT2 in the interferon/JAK/STAT signaling pathway independent of its E3 ligase activity. Mechanistically, interacts with the intracellular domain of IFNAR1 and thereby inhibits the association between TYK2 and IFNAR1. This Mus musculus (Mouse) protein is Tripartite motif-containing protein 10 (Trim10).